A 167-amino-acid chain; its full sequence is Type IV major pilin protein PilE (167 aa).

A propeptide spans 1 to 7 (leader sequence); sequence MNTLQKG. Position 8 is an N-methylphenylalanine (phenylalanine 8). The helical transmembrane segment at 8–28 threads the bilayer; sequence FTLIELMIVIAIVGILAAVAL. Serine 70 is a glycosylation site (O-linked (GlcNAc...) serine). Residues cysteine 127 and cysteine 160 are joined by a disulfide bond.

Belongs to the N-Me-Phe pilin family. The pili are polar flexible filaments of about 5.4 nanometers diameter and 2.5 micrometers average length; they consist of only a single polypeptide chain arranged in a helical configuration of five subunits per turn in the assembled pilus.

The protein resides in the fimbrium. The protein localises to the membrane. Functionally, major component of the type IV pilus (T4P) that plays a role in cellular adherence, microcolony formation, resistance to neutrophil mediated killing, twitching motility as well as transformation. Mediates the attachment and the formation of bacterial microcolonies on host epithelial cells. Mechanistically, pili retractation induces host NF-kappa-B activation in infected cells, which is temporally associated with the formation of gonococcal microcolonies. In Neisseria gonorrhoeae, this protein is Type IV major pilin protein PilE (pilE).